A 576-amino-acid polypeptide reads, in one-letter code: 9-cis-epoxycarotenoid dioxygenase NCED2, chloroplastic (576 aa).

The N-terminal 34 residues, M1–A34, are a transit peptide targeting the chloroplast. Fe cation is bound by residues H270, H319, H385, and H563.

This sequence belongs to the carotenoid oxygenase family. It depends on Fe(2+) as a cofactor.

The protein resides in the plastid. It is found in the chloroplast. The catalysed reaction is a 9-cis-epoxycarotenoid + O2 = a 12'-apo-carotenal + 2-cis,4-trans-xanthoxin. The enzyme catalyses 9-cis-violaxanthin + O2 = (3S,5R,6S)-5,6-epoxy-3-hydroxy-5,6-dihydro-12'-apo-beta-caroten-12'-al + 2-cis,4-trans-xanthoxin. It catalyses the reaction 9'-cis-neoxanthin + O2 = (3S,5R,6R)-3,5-dihydroxy-6,7-didehydro-5,6-dihydro-12'-apo-beta-caroten-12'-al + 2-cis,4-trans-xanthoxin. Functionally, has a 11,12(11',12') 9-cis epoxycarotenoid cleavage activity. Catalyzes the first step of abscisic-acid biosynthesis from carotenoids. This is 9-cis-epoxycarotenoid dioxygenase NCED2, chloroplastic from Oryza sativa subsp. japonica (Rice).